The chain runs to 93 residues: UPF0358 protein BPUM_1375 (93 aa).

The protein belongs to the UPF0358 family.

This is UPF0358 protein BPUM_1375 from Bacillus pumilus (strain SAFR-032).